Reading from the N-terminus, the 275-residue chain is MTSTSNLIEQVIEAWQNMQAKTPLVQCITNSVAANYTANVLLASGASPAMIDNPYEAESFTKISSALSINLGTPTSEQMQAMQISAKTAQLNNVPWVLDPVGYGPILAWRSQMTDELLQFKPSVIRGNASEISTLAGNQVQSKGVDSTLSSDQAYQQAYVLLAHADCIAISGESDYILSRELDAVIQVNGGSPLQPKITATGCALGALIAAYSAVTTPTIAALSAHIHFAIAGKLAANQAQTMGSFSSIFMDYIHMLDANLIEQYADIKLLDKQA.

Residue Met50 participates in substrate binding. ATP-binding residues include Arg126 and Ser171. Substrate is bound at residue Ala200.

This sequence belongs to the Thz kinase family. Mg(2+) is required as a cofactor.

It carries out the reaction 5-(2-hydroxyethyl)-4-methylthiazole + ATP = 4-methyl-5-(2-phosphooxyethyl)-thiazole + ADP + H(+). It functions in the pathway cofactor biosynthesis; thiamine diphosphate biosynthesis; 4-methyl-5-(2-phosphoethyl)-thiazole from 5-(2-hydroxyethyl)-4-methylthiazole: step 1/1. Functionally, catalyzes the phosphorylation of the hydroxyl group of 4-methyl-5-beta-hydroxyethylthiazole (THZ). This chain is Hydroxyethylthiazole kinase, found in Acinetobacter baumannii (strain SDF).